A 765-amino-acid chain; its full sequence is Dipeptidyl peptidase 4 (765 aa).

At 1 to 6 the chain is on the cytoplasmic side; it reads MKTPWK. The helical; Signal-anchor for type II membrane protein transmembrane segment at 7–29 threads the bilayer; the sequence is VLLGLLGLAALITIITVPVVLLN. Over 30 to 765 the chain is Extracellular; that stretch reads KGNDAAADSR…HFIKQCFSLP (736 aa). N-linked (GlcNAc...) asparagine glycosylation is found at asparagine 84, asparagine 91, asparagine 149, asparagine 178, asparagine 228, asparagine 280, asparagine 320, asparagine 330, and asparagine 331. 3 disulfides stabilise this stretch: cysteine 384–cysteine 393, cysteine 443–cysteine 446, and cysteine 453–cysteine 471. Asparagine 519 carries an N-linked (GlcNAc...) asparagine glycan. The Charge relay system role is filled by serine 629. An intrachain disulfide couples cysteine 648 to cysteine 761. N-linked (GlcNAc...) asparagine glycosylation is present at asparagine 684. Catalysis depends on charge relay system residues aspartate 707 and histidine 739.

It belongs to the peptidase S9B family. DPPIV subfamily. Monomer. Homodimer. Heterodimer with Seprase (FAP). Requires homodimerization for optimal dipeptidyl peptidase activity and T-cell costimulation. Found in a membrane raft complex, at least composed of BCL10, CARD11, DPP4 and IKBKB. Associates with collagen. Interacts with PTPRC; the interaction is enhanced in an interleukin-12-dependent manner in activated lymphocytes. Interacts (extracellular domain) with ADA; does not inhibit its dipeptidyl peptidase activity. Interacts with CAV1 (via the N-terminus); the interaction is direct. Interacts (via cytoplasmic tail) with CARD11 (via PDZ domain); its homodimerization is necessary for interaction with CARD11. Interacts with IGF2R; the interaction is direct. Interacts with GPC3. Post-translationally, the soluble form (Dipeptidyl peptidase 4 soluble form also named SDPP) derives from the membrane form (Dipeptidyl peptidase 4 membrane form also named MDPP) by proteolytic processing. N- and O-Glycosylated. In terms of processing, phosphorylated. Mannose 6-phosphate residues in the carbohydrate moiety are necessary for interaction with IGF2R in activated T-cells. Mannose 6-phosphorylation is induced during T-cell activation.

It localises to the secreted. The protein resides in the cell membrane. The protein localises to the apical cell membrane. It is found in the cell projection. Its subcellular location is the invadopodium membrane. It localises to the lamellipodium membrane. The protein resides in the cell junction. The protein localises to the membrane raft. The enzyme catalyses Release of an N-terminal dipeptide, Xaa-Yaa-|-Zaa-, from a polypeptide, preferentially when Yaa is Pro, provided Zaa is neither Pro nor hydroxyproline.. With respect to regulation, inhibited by GPC3 and diprotin A. In terms of biological role, cell surface glycoprotein receptor involved in the costimulatory signal essential for T-cell receptor (TCR)-mediated T-cell activation. Acts as a positive regulator of T-cell coactivation, by binding at least ADA, CAV1, IGF2R, and PTPRC. Its binding to CAV1 and CARD11 induces T-cell proliferation and NF-kappa-B activation in a T-cell receptor/CD3-dependent manner. Its interaction with ADA also regulates lymphocyte-epithelial cell adhesion. In association with FAP is involved in the pericellular proteolysis of the extracellular matrix (ECM), the migration and invasion of endothelial cells into the ECM. May be involved in the promotion of lymphatic endothelial cells adhesion, migration and tube formation. When overexpressed, enhanced cell proliferation, a process inhibited by GPC3. Also acts as a serine exopeptidase with a dipeptidyl peptidase activity that regulates various physiological processes by cleaving peptides in the circulation, including many chemokines, mitogenic growth factors, neuropeptides and peptide hormones. Removes N-terminal dipeptides sequentially from polypeptides having unsubstituted N-termini provided that the penultimate residue is proline. The chain is Dipeptidyl peptidase 4 (DPP4) from Felis catus (Cat).